Reading from the N-terminus, the 316-residue chain is Acetyl-coenzyme A carboxylase carboxyl transferase subunit alpha (316 aa).

The 255-residue stretch at 39 to 293 (RLQDKSKALT…RGELLTQLKM (255 aa)) folds into the CoA carboxyltransferase C-terminal domain.

It belongs to the AccA family. As to quaternary structure, acetyl-CoA carboxylase is a heterohexamer composed of biotin carboxyl carrier protein (AccB), biotin carboxylase (AccC) and two subunits each of ACCase subunit alpha (AccA) and ACCase subunit beta (AccD).

It localises to the cytoplasm. The catalysed reaction is N(6)-carboxybiotinyl-L-lysyl-[protein] + acetyl-CoA = N(6)-biotinyl-L-lysyl-[protein] + malonyl-CoA. It functions in the pathway lipid metabolism; malonyl-CoA biosynthesis; malonyl-CoA from acetyl-CoA: step 1/1. Component of the acetyl coenzyme A carboxylase (ACC) complex. First, biotin carboxylase catalyzes the carboxylation of biotin on its carrier protein (BCCP) and then the CO(2) group is transferred by the carboxyltransferase to acetyl-CoA to form malonyl-CoA. This chain is Acetyl-coenzyme A carboxylase carboxyl transferase subunit alpha, found in Pseudomonas aeruginosa (strain LESB58).